The chain runs to 207 residues: Ribosomal RNA small subunit methyltransferase G (207 aa).

Residues G76, Q81, 127–128 (VE), and R141 each bind S-adenosyl-L-methionine.

It belongs to the methyltransferase superfamily. RNA methyltransferase RsmG family.

It is found in the cytoplasm. The enzyme catalyses guanosine(527) in 16S rRNA + S-adenosyl-L-methionine = N(7)-methylguanosine(527) in 16S rRNA + S-adenosyl-L-homocysteine. In terms of biological role, specifically methylates the N7 position of guanine in position 527 of 16S rRNA. The protein is Ribosomal RNA small subunit methyltransferase G of Neisseria meningitidis serogroup B (strain ATCC BAA-335 / MC58).